The chain runs to 957 residues: Glycine dehydrogenase (decarboxylating) (957 aa).

Lys-708 carries the N6-(pyridoxal phosphate)lysine modification.

Belongs to the GcvP family. In terms of assembly, the glycine cleavage system is composed of four proteins: P, T, L and H. The cofactor is pyridoxal 5'-phosphate.

It catalyses the reaction N(6)-[(R)-lipoyl]-L-lysyl-[glycine-cleavage complex H protein] + glycine + H(+) = N(6)-[(R)-S(8)-aminomethyldihydrolipoyl]-L-lysyl-[glycine-cleavage complex H protein] + CO2. Functionally, the glycine cleavage system catalyzes the degradation of glycine. The P protein binds the alpha-amino group of glycine through its pyridoxal phosphate cofactor; CO(2) is released and the remaining methylamine moiety is then transferred to the lipoamide cofactor of the H protein. The protein is Glycine dehydrogenase (decarboxylating) of Escherichia coli (strain SE11).